The chain runs to 236 residues: 2-C-methyl-D-erythritol 4-phosphate cytidylyltransferase (236 aa).

Belongs to the IspD/TarI cytidylyltransferase family. IspD subfamily.

The enzyme catalyses 2-C-methyl-D-erythritol 4-phosphate + CTP + H(+) = 4-CDP-2-C-methyl-D-erythritol + diphosphate. The protein operates within isoprenoid biosynthesis; isopentenyl diphosphate biosynthesis via DXP pathway; isopentenyl diphosphate from 1-deoxy-D-xylulose 5-phosphate: step 2/6. Catalyzes the formation of 4-diphosphocytidyl-2-C-methyl-D-erythritol from CTP and 2-C-methyl-D-erythritol 4-phosphate (MEP). The chain is 2-C-methyl-D-erythritol 4-phosphate cytidylyltransferase from Alkaliphilus oremlandii (strain OhILAs) (Clostridium oremlandii (strain OhILAs)).